Reading from the N-terminus, the 241-residue chain is MIDLTGKTSLITGASGGIGGAIARLLHKLGSHVIISGSNEEKLKSLGNVLKDNYTIEICNLANKEECSNLISKAPKLDILVCNAGITSDTLAIRMKDEDFDKVIDINLKANFILNREAIKKMMQNRYGRIINISSIVGISGNPGQANYCASKAGLIGMTKSLSYEVATRGITVNAVAPGFIKSDMTDKLNEKQREAIVQKIPLGTYGMPEDVANAVAFLASDQASYITGQTIHVNGGMLMV.

NADP(+) contacts are provided by residues 13 to 16, Ser38, 57 to 58, and Asn83; these read GASG and EI. Residue Ser135 coordinates substrate. Tyr148 acts as the Proton acceptor in catalysis. NADP(+)-binding positions include 148–152 and Ile181; that span reads YCASK.

The protein belongs to the short-chain dehydrogenases/reductases (SDR) family. As to quaternary structure, homotetramer.

It catalyses the reaction a (3R)-hydroxyacyl-[ACP] + NADP(+) = a 3-oxoacyl-[ACP] + NADPH + H(+). Its pathway is lipid metabolism; fatty acid biosynthesis. Its function is as follows. Catalyzes the NADPH-dependent reduction of beta-ketoacyl-ACP substrates to beta-hydroxyacyl-ACP products, the first reductive step in the elongation cycle of fatty acid biosynthesis. This chain is 3-oxoacyl-[acyl-carrier-protein] reductase FabG (fabG), found in Rickettsia felis (strain ATCC VR-1525 / URRWXCal2) (Rickettsia azadi).